The primary structure comprises 386 residues: Phosphoglycerate kinase (386 aa).

Substrate contacts are provided by residues 21-23, arginine 36, 59-62, arginine 112, and arginine 145; these read DLN and HLGR. ATP is bound by residues lysine 196, glutamate 313, and 339–342; that span reads GGDT.

Belongs to the phosphoglycerate kinase family. Monomer.

It is found in the cytoplasm. The catalysed reaction is (2R)-3-phosphoglycerate + ATP = (2R)-3-phospho-glyceroyl phosphate + ADP. Its pathway is carbohydrate degradation; glycolysis; pyruvate from D-glyceraldehyde 3-phosphate: step 2/5. The sequence is that of Phosphoglycerate kinase from Haemophilus influenzae (strain PittEE).